A 606-amino-acid polypeptide reads, in one-letter code: Anthranilate synthase alpha subunit 2, chloroplastic (606 aa).

Residues 1-49 constitute a chloroplast transit peptide; it reads MESIAAATFTPSRLAARPATPAAAAAPVRARAAVAAGGRRRTSRRGGVR.

It belongs to the anthranilate synthase component I family. Heterotetramer consisting of two non-identical subunits: a beta subunit and a large alpha subunit.

Its subcellular location is the plastid. It localises to the chloroplast. The catalysed reaction is chorismate + L-glutamine = anthranilate + pyruvate + L-glutamate + H(+). The protein operates within amino-acid biosynthesis; L-tryptophan biosynthesis; L-tryptophan from chorismate: step 1/5. With respect to regulation, feedback inhibition by tryptophan. Part of a heterotetrameric complex that catalyzes the two-step biosynthesis of anthranilate, an intermediate in the biosynthesis of L-tryptophan. In the first step, the glutamine-binding beta subunit of anthranilate synthase (AS) provides the glutamine amidotransferase activity which generates ammonia as a substrate that, along with chorismate, is used in the second step, catalyzed by the large alpha subunit of AS to produce anthranilate. The polypeptide is Anthranilate synthase alpha subunit 2, chloroplastic (Oryza sativa subsp. japonica (Rice)).